A 399-amino-acid chain; its full sequence is Dual specificity mitogen-activated protein kinase kinase 4 (399 aa).

The disordered stretch occupies residues 1-40; sequence MAAPSPSGGGGSGGGSGSGTPGPVGSPAPGHPAVSSMQGK. N-acetylalanine is present on Ala-2. The segment covering 7–22 has biased composition (gly residues); that stretch reads SGGGGSGGGSGSGTPG. A d domain region spans residues 37 to 52; sequence MQGKRKALKLNFANPP. Arg-58 carries the post-translational modification Asymmetric dimethylarginine; alternate. Arg-58 is modified (omega-N-methylarginine; alternate). The residue at position 90 (Ser-90) is a Phosphoserine. Residues 102-367 form the Protein kinase domain; it reads LKDLGEIGRG…YKELLKHPFI (266 aa). Residues 108 to 116 and Lys-131 contribute to the ATP site; that span reads IGRGAYGSV. Catalysis depends on Asp-229, which acts as the Proton acceptor. Ser-257 bears the Phosphoserine; by MAP3K mark. The residue at position 261 (Thr-261) is a Phosphothreonine; by MAP3K. A DVD domain region spans residues 364–387; that stretch reads HPFILMYEERAVEVACYVCKILDQ.

The protein belongs to the protein kinase superfamily. STE Ser/Thr protein kinase family. MAP kinase kinase subfamily. In terms of assembly, interacts with SPAG9. Interacts (via its D domain) with its substrates MAPK8/JNK1, MAPK9/JNK2, MAPK10/JNK3, MAPK11 and MAPK14. Interacts (via its DVD domain) with MAP3Ks activators like MAP3K1/MEKK1 and MAP3K11/MLK3. Interacts with ARRB1, ARRB2 and MAPK8IP3/JIP3. Activated by phosphorylation on Ser-257 and Thr-261 by MAP kinase kinase kinases (MAP3Ks). Abundant expression is seen in the skeletal muscle. It is also widely expressed in other tissues.

It localises to the cytoplasm. The protein localises to the nucleus. It carries out the reaction L-seryl-[protein] + ATP = O-phospho-L-seryl-[protein] + ADP + H(+). It catalyses the reaction L-threonyl-[protein] + ATP = O-phospho-L-threonyl-[protein] + ADP + H(+). The enzyme catalyses L-tyrosyl-[protein] + ATP = O-phospho-L-tyrosyl-[protein] + ADP + H(+). Its activity is regulated as follows. Activated in response to a variety of cellular stresses, including UV and gamma-irradiation, heat shock, hyperosmolarity, T-cell receptor stimulation, peroxide and inflammatory cytokines. Also activated by developmental cues. MAP2K4/MKK4 is activated by the majority of MKKKs, such as MAP3K5/ASK1, MAP3K1/MEKK1, MAP3K7/TAK1, MAP3K10/MLK2, MAP3K11/MLK3, MAP3K12/DLK and MAP3K13/LZK. Its function is as follows. Dual specificity protein kinase which acts as an essential component of the MAP kinase signal transduction pathway. Essential component of the stress-activated protein kinase/c-Jun N-terminal kinase (SAP/JNK) signaling pathway. With MAP2K7/MKK7, is the one of the only known kinase to directly activate the stress-activated protein kinase/c-Jun N-terminal kinases MAPK8/JNK1, MAPK9/JNK2 and MAPK10/JNK3. MAP2K4/MKK4 and MAP2K7/MKK7 both activate the JNKs by phosphorylation, but they differ in their preference for the phosphorylation site in the Thr-Pro-Tyr motif. MAP2K4 shows preference for phosphorylation of the Tyr residue and MAP2K7/MKK7 for the Thr residue. The phosphorylation of the Thr residue by MAP2K7/MKK7 seems to be the prerequisite for JNK activation at least in response to pro-inflammatory cytokines, while other stimuli activate both MAP2K4/MKK4 and MAP2K7/MKK7 which synergistically phosphorylate JNKs. MAP2K4 is required for maintaining peripheral lymphoid homeostasis. The MKK/JNK signaling pathway is also involved in mitochondrial death signaling pathway, including the release cytochrome c, leading to apoptosis. Whereas MAP2K7/MKK7 exclusively activates JNKs, MAP2K4/MKK4 additionally activates the p38 MAPKs MAPK11, MAPK12, MAPK13 and MAPK14. This chain is Dual specificity mitogen-activated protein kinase kinase 4 (MAP2K4), found in Homo sapiens (Human).